Reading from the N-terminus, the 219-residue chain is uncharacterized protein (219 aa).

The N-terminal stretch at 1–22 (MKKRRKICYCNTALLLMILLAG) is a signal peptide. A lipid anchor (N-palmitoyl cysteine) is attached at C23. C23 carries S-diacylglycerol cysteine lipidation. Positions 26–89 (SKDGEAQQPS…SAEEKSKEDN (64 aa)) are disordered. Residues 32–42 (QQPSNQASAVQ) show a composition bias toward polar residues. The span at 43–61 (TDEKHTEPEESTKIRKDEA) shows a compositional bias: basic and acidic residues.

The protein resides in the cell membrane. This is an uncharacterized protein from Bacillus subtilis (strain 168).